The primary structure comprises 372 residues: uncharacterized protein (372 aa).

Positions 38-270 (FFIEGGGTKG…ANNIPLDYLI (233 aa)) constitute a PNPLA domain. A GXGXXG motif is present at residues 42 to 47 (GGGTKG). The GXSXG motif lies at 74 to 78 (GTSVG). Catalysis depends on S76, which acts as the Nucleophile. The active-site Proton acceptor is D257. The DGA/G motif lies at 257-259 (DGG).

Its function is as follows. Probable lipid hydrolase. This is an uncharacterized protein from Acanthamoeba polyphaga (Amoeba).